A 296-amino-acid chain; its full sequence is Ribosomal protein L11 methyltransferase (296 aa).

S-adenosyl-L-methionine is bound by residues Thr-146, Gly-167, Asp-189, and Asn-231.

The protein belongs to the methyltransferase superfamily. PrmA family.

The protein localises to the cytoplasm. It catalyses the reaction L-lysyl-[protein] + 3 S-adenosyl-L-methionine = N(6),N(6),N(6)-trimethyl-L-lysyl-[protein] + 3 S-adenosyl-L-homocysteine + 3 H(+). Methylates ribosomal protein L11. This is Ribosomal protein L11 methyltransferase from Haemophilus influenzae (strain ATCC 51907 / DSM 11121 / KW20 / Rd).